The chain runs to 489 residues: Rhamnulokinase (489 aa).

Position 13 to 17 (13 to 17 (ASSGR)) interacts with ATP. The cysteines at positions 68 and 222 are disulfide-linked. Substrate-binding positions include Gly83 and 236–238 (HDT). The Proton acceptor role is filled by Asp237. Thr259 lines the ATP pocket. Asn296 contacts substrate. Gln304 contributes to the ATP binding site. Cys353 and Cys370 are oxidised to a cystine. Gly402 serves as a coordination point for ATP. A disulfide bond links Cys413 and Cys417.

Belongs to the rhamnulokinase family. Mg(2+) is required as a cofactor.

It catalyses the reaction L-rhamnulose + ATP = L-rhamnulose 1-phosphate + ADP + H(+). The protein operates within carbohydrate degradation; L-rhamnose degradation; glycerone phosphate from L-rhamnose: step 2/3. Functionally, involved in the catabolism of L-rhamnose (6-deoxy-L-mannose). Catalyzes the transfer of the gamma-phosphate group from ATP to the 1-hydroxyl group of L-rhamnulose to yield L-rhamnulose 1-phosphate. This Shigella sonnei (strain Ss046) protein is Rhamnulokinase.